The sequence spans 452 residues: Pup--protein ligase (452 aa).

Position 9 (E9) interacts with Mg(2+). Residue R53 participates in ATP binding. A Mg(2+)-binding site is contributed by Y55. D57 (proton acceptor) is an active-site residue. E63 provides a ligand contact to Mg(2+). Positions 66 and 419 each coordinate ATP.

The protein belongs to the Pup ligase/Pup deamidase family. Pup-conjugating enzyme subfamily.

It carries out the reaction ATP + [prokaryotic ubiquitin-like protein]-L-glutamate + [protein]-L-lysine = ADP + phosphate + N(6)-([prokaryotic ubiquitin-like protein]-gamma-L-glutamyl)-[protein]-L-lysine.. It functions in the pathway protein degradation; proteasomal Pup-dependent pathway. It participates in protein modification; protein pupylation. In terms of biological role, catalyzes the covalent attachment of the prokaryotic ubiquitin-like protein modifier Pup to the proteasomal substrate proteins, thereby targeting them for proteasomal degradation. This tagging system is termed pupylation. The ligation reaction involves the side-chain carboxylate of the C-terminal glutamate of Pup and the side-chain amino group of a substrate lysine. The polypeptide is Pup--protein ligase (Mycobacterium tuberculosis (strain KZN 1435 / MDR)).